The chain runs to 320 residues: Ferrochelatase (320 aa).

Residues H194 and E275 each coordinate Fe cation.

It belongs to the ferrochelatase family. In terms of assembly, monomer.

It localises to the cytoplasm. The enzyme catalyses heme b + 2 H(+) = protoporphyrin IX + Fe(2+). The protein operates within porphyrin-containing compound metabolism; protoheme biosynthesis; protoheme from protoporphyrin-IX: step 1/1. Functionally, catalyzes the ferrous insertion into protoporphyrin IX. The sequence is that of Ferrochelatase from Escherichia coli O9:H4 (strain HS).